An 83-amino-acid chain; its full sequence is Large ribosomal subunit protein bL31B (83 aa).

The protein belongs to the bacterial ribosomal protein bL31 family. Type B subfamily. As to quaternary structure, part of the 50S ribosomal subunit.

The polypeptide is Large ribosomal subunit protein bL31B (Lacticaseibacillus casei (strain BL23) (Lactobacillus casei)).